Consider the following 653-residue polypeptide: MTVSSHRLELLSPARDAAIAREAILHGADAVYIGGPGFGARHNASNSLKDIAELVPFAHRYGAKIFVTLNTILHDDELEPAQRLITDLYQTGVDALIVQDMGILELDIPPIELHASTQCDIRTVEKAKFLSDVGFTQIVLARELNLDQIRAIHQATDATIEFFIHGALCVAYSGQCYISHAQTGRSANRGDCSQACRLPYTLKDDQGRVVSYEKHLLSMKDNDQTANLGALIDAGVRSFKIEGRYKDMSYVKNITAHYRQMLDAIIEERGDLARASSGRTEHFFVPSTEKTFHRGSTDYFVNARKGDIGAFDSPKFIGLPVGEVVKVAKDHLDVAVTEPLANGDGLNVLIKREVVGFRANTVEKTGENQYRVWPNEMPADLHKIRPHHPLNRNLDHNWQQALTKTSSERRVAVDIELGGWQEQLILTLTSEEGVSITHTLDGQFDEANNAEKAMNNLKDGLAKLGQTLYYARDVQINLPGALFVPNSLLNQFRREAADMLDAARLASYQRGSRKPVADPAPVYPQTHLSFLANVYNQKAREFYHRYGVQLIDAAYEAHEEKGEVPVMITKHCLRFAFNLCPKQAKGNIKSWKATPMQLVNGDEVLTLKFDCRPCEMHVIGKIKNHILKMPLPGSVVASVSPDELLKTLPKRKG.

It belongs to the peptidase U32 family. As to quaternary structure, interacts with precursors of the 50S ribosomal subunit.

Its activity is regulated as follows. Iron-sulfur clusters and prephenate are required for ho5C2501 formation. Responsible for the formation of the 5-hydroxycytidine modification at the C2501 position (ho5C2501) of 23S rRNA. May be a Fe-S protein that catalyzes ho5C2501 formation using prephenate as a hydroxyl group donor. The chain is 23S rRNA 5-hydroxycytidine C2501 synthase from Escherichia coli (strain K12).